Reading from the N-terminus, the 271-residue chain is Formamidopyrimidine-DNA glycosylase (271 aa).

The Schiff-base intermediate with DNA role is filled by Pro-2. Glu-3 functions as the Proton donor in the catalytic mechanism. Residue Lys-58 is the Proton donor; for beta-elimination activity of the active site. DNA contacts are provided by His-92, Arg-111, and Arg-152. The segment at 237–271 (MVYGREGEACRHCGGELKHATIGQRATVWCAACQR) adopts an FPG-type zinc-finger fold. Arg-261 acts as the Proton donor; for delta-elimination activity in catalysis.

Belongs to the FPG family. Monomer. The cofactor is Zn(2+).

The enzyme catalyses Hydrolysis of DNA containing ring-opened 7-methylguanine residues, releasing 2,6-diamino-4-hydroxy-5-(N-methyl)formamidopyrimidine.. The catalysed reaction is 2'-deoxyribonucleotide-(2'-deoxyribose 5'-phosphate)-2'-deoxyribonucleotide-DNA = a 3'-end 2'-deoxyribonucleotide-(2,3-dehydro-2,3-deoxyribose 5'-phosphate)-DNA + a 5'-end 5'-phospho-2'-deoxyribonucleoside-DNA + H(+). Functionally, involved in base excision repair of DNA damaged by oxidation or by mutagenic agents. Acts as a DNA glycosylase that recognizes and removes damaged bases. Has a preference for oxidized purines, such as 7,8-dihydro-8-oxoguanine (8-oxoG). Has AP (apurinic/apyrimidinic) lyase activity and introduces nicks in the DNA strand. Cleaves the DNA backbone by beta-delta elimination to generate a single-strand break at the site of the removed base with both 3'- and 5'-phosphates. The polypeptide is Formamidopyrimidine-DNA glycosylase (Xanthomonas campestris pv. campestris (strain ATCC 33913 / DSM 3586 / NCPPB 528 / LMG 568 / P 25)).